A 310-amino-acid polypeptide reads, in one-letter code: MKVGIVGSGMVGSATAYALALLGVAREVVLVDLDRKLAQAHAEDILHATPFAHPVWVRAGSYGDLEGARAVVLAAGVAQRPGETRLQLLDRNAQVFAQVVPRVLEAAPEAVLLVATNPVDVMTQVAYRLSGLPPGRVVGSGTILDTARFRALLAEHLRVAPQSVHAYVLGEHGDSEVLVWSSAQVGGVPLLEFAEARGRALSPEDRARIDEGVRRAAYRIIEGKGATYYGIGAGLARLVRAILTDEKGVYTVSAFTPEVEGVLEVSLSLPRILGAGGVEGTVYPSLSPEEREALRRSAEILKEAAFALGF.

NAD(+) is bound by residues Val-11, Asp-32, Tyr-62, and 76-77; that span reads GV. Residues Gln-79, Arg-85, and 117–120 each bind substrate; that span reads NPVD. Residues 115-117 and Ser-140 contribute to the NAD(+) site; that span reads ATN. Position 145-148 (145-148) interacts with substrate; that stretch reads DTAR. Positions 150 and 165 each coordinate beta-D-fructose 1,6-bisphosphate. Catalysis depends on His-172, which acts as the Proton acceptor. Position 218 is a phosphotyrosine (Tyr-218). Residue Thr-227 coordinates substrate.

It belongs to the LDH/MDH superfamily. LDH family. Homotetramer.

It is found in the cytoplasm. The catalysed reaction is (S)-lactate + NAD(+) = pyruvate + NADH + H(+). The protein operates within fermentation; pyruvate fermentation to lactate; (S)-lactate from pyruvate: step 1/1. Its activity is regulated as follows. Allosterically activated by fructose 1,6-bisphosphate (FBP). Functionally, catalyzes the conversion of lactate to pyruvate. The sequence is that of L-lactate dehydrogenase from Thermus thermophilus (strain ATCC BAA-163 / DSM 7039 / HB27).